The chain runs to 281 residues: Ribosomal RNA small subunit methyltransferase A (281 aa).

S-adenosyl-L-methionine is bound by residues asparagine 36, leucine 38, glycine 63, glutamate 84, aspartate 109, and asparagine 127.

The protein belongs to the class I-like SAM-binding methyltransferase superfamily. rRNA adenine N(6)-methyltransferase family. RsmA subfamily.

Its subcellular location is the cytoplasm. It catalyses the reaction adenosine(1518)/adenosine(1519) in 16S rRNA + 4 S-adenosyl-L-methionine = N(6)-dimethyladenosine(1518)/N(6)-dimethyladenosine(1519) in 16S rRNA + 4 S-adenosyl-L-homocysteine + 4 H(+). In terms of biological role, specifically dimethylates two adjacent adenosines (A1518 and A1519) in the loop of a conserved hairpin near the 3'-end of 16S rRNA in the 30S particle. May play a critical role in biogenesis of 30S subunits. In Borrelia garinii subsp. bavariensis (strain ATCC BAA-2496 / DSM 23469 / PBi) (Borreliella bavariensis), this protein is Ribosomal RNA small subunit methyltransferase A.